We begin with the raw amino-acid sequence, 362 residues long: Erythritol/L-threitol dehydrogenase (362 aa).

Positions 45, 76, 77, 109, 112, 115, and 123 each coordinate Zn(2+). Positions 195 and 215 each coordinate NAD(+).

It belongs to the zinc-containing alcohol dehydrogenase family. It depends on Zn(2+) as a cofactor.

It carries out the reaction erythritol + NAD(+) = D-erythrulose + NADH + H(+). It catalyses the reaction L-threitol + NAD(+) = L-erythrulose + NADH + H(+). The protein operates within carbohydrate metabolism; erythritol degradation. It participates in carbohydrate metabolism; L-threitol degradation. In terms of biological role, catalyzes the NAD-dependent reversible oxidation of erythritol and L-threitol. Involved in the degradation pathways of erythritol and L-threitol, that allow M.smegmatis to grow on these compounds as the sole carbon source. The polypeptide is Erythritol/L-threitol dehydrogenase (Mycolicibacterium smegmatis (strain ATCC 700084 / mc(2)155) (Mycobacterium smegmatis)).